A 154-amino-acid polypeptide reads, in one-letter code: Transcription antitermination protein NusB (154 aa).

The tract at residues 132 to 154 is disordered; it reads KDKQSPQSTPLDDSDKDESDQTN. A compositionally biased stretch (acidic residues) spans 143-154; it reads DDSDKDESDQTN.

Belongs to the NusB family.

Its function is as follows. Involved in transcription antitermination. Required for transcription of ribosomal RNA (rRNA) genes. Binds specifically to the boxA antiterminator sequence of the ribosomal RNA (rrn) operons. The polypeptide is Transcription antitermination protein NusB (Bifidobacterium animalis subsp. lactis (strain AD011)).